The sequence spans 237 residues: Nodulation protein NolA (237 aa).

Residues 10 to 79 enclose the HTH merR-type domain; that stretch reads RWRIGELAEA…LVEIRKAMEG (70 aa). Residues 13–32 constitute a DNA-binding region (H-T-H motif); sequence IGELAEATGVTVRTLHHYEH.

Its function is as follows. Involved in genotype-specific nodulation of soybeans. This is Nodulation protein NolA (nolA) from Bradyrhizobium diazoefficiens (strain JCM 10833 / BCRC 13528 / IAM 13628 / NBRC 14792 / USDA 110).